The chain runs to 129 residues: Small ribosomal subunit protein uS12 (129 aa).

The disordered stretch occupies residues 1-25; sequence MPTYNQLVRFGRKSKTRKTKSPALE. A compositionally biased stretch (basic residues) spans 10–20; it reads FGRKSKTRKTK. Position 89 is a 3-methylthioaspartic acid (D89). Positions 109 to 129 are disordered; the sequence is GRKQGRSRYGTPRKQVAVTKK.

It belongs to the universal ribosomal protein uS12 family. As to quaternary structure, part of the 30S ribosomal subunit. Contacts proteins S8 and S17. May interact with IF1 in the 30S initiation complex.

In terms of biological role, with S4 and S5 plays an important role in translational accuracy. Functionally, interacts with and stabilizes bases of the 16S rRNA that are involved in tRNA selection in the A site and with the mRNA backbone. Located at the interface of the 30S and 50S subunits, it traverses the body of the 30S subunit contacting proteins on the other side and probably holding the rRNA structure together. The combined cluster of proteins S8, S12 and S17 appears to hold together the shoulder and platform of the 30S subunit. In Rickettsia peacockii (strain Rustic), this protein is Small ribosomal subunit protein uS12.